The sequence spans 96 residues: Sec-independent protein translocase protein TatA (96 aa).

A helical transmembrane segment spans residues 1 to 21 (MGFSSIWHWIIVLVVVLLLFG). Positions 42 to 96 (GMADDEDDEAASVSAERRGIEDGKPAQTIYPPQQPQQPQQPPQQPPVHRDDAPRG) are disordered. Residues 56 to 65 (AERRGIEDGK) are compositionally biased toward basic and acidic residues. Positions 73–86 (PQQPQQPQQPPQQP) are enriched in pro residues.

The protein belongs to the TatA/E family. As to quaternary structure, the Tat system comprises two distinct complexes: a TatABC complex, containing multiple copies of TatA, TatB and TatC subunits, and a separate TatA complex, containing only TatA subunits. Substrates initially bind to the TatABC complex, which probably triggers association of the separate TatA complex to form the active translocon.

It localises to the cell inner membrane. Its function is as follows. Part of the twin-arginine translocation (Tat) system that transports large folded proteins containing a characteristic twin-arginine motif in their signal peptide across membranes. TatA could form the protein-conducting channel of the Tat system. This is Sec-independent protein translocase protein TatA from Rhodospirillum rubrum (strain ATCC 11170 / ATH 1.1.1 / DSM 467 / LMG 4362 / NCIMB 8255 / S1).